The sequence spans 117 residues: Inner kinetochore subunit MHF1 (117 aa).

Belongs to the TAF9 family. CENP-S/MHF1 subfamily. The MHF histone-fold complex is a heterotetramer of 2 MHF1-MHF2 heterodimers. Together with MPH1/FANCM, forms the FANCM-MHF complex. Component of the inner kinetochore constitutive centromere-associated network (CCAN).

Its function is as follows. dsDNA-binding component of a FANCM-MHF complex involved in DNA damage repair and genome maintenance. FANCM-MHF promotes gene conversion at blocked replication forks, probably by reversal of the stalled fork. Component of the kinetochore, a multiprotein complex that assembles on centromeric DNA and attaches chromosomes to spindle microtubules, mediating chromosome segregation and sister chromatid segregation during meiosis and mitosis. Component of the inner kinetochore constitutive centromere-associated network (CCAN), which serves as a structural platform for outer kinetochore assembly. This is Inner kinetochore subunit MHF1 from Candida albicans (strain SC5314 / ATCC MYA-2876) (Yeast).